The sequence spans 198 residues: MSETFIYPQANLIAGVDEVGRGPLVGAVVTAAVILDPNRPIVGLADSKKLSEKRRLSLYDEITEKALSWSLGRAEPEEIDQLNILHATMLAMQRAVSGLHIVPDYVLIDGNRCPKLQMPSLAVVKGDSRVAEISAASILAKVTRDREMTELDLLFPEYGFAQHKGYPTAFHLEKLAALGATVHHRRSFGPVKRVLGLV.

One can recognise an RNase H type-2 domain in the interval 11-198 (NLIAGVDEVG…GPVKRVLGLV (188 aa)). Residues aspartate 17, glutamate 18, and aspartate 109 each contribute to the a divalent metal cation site.

This sequence belongs to the RNase HII family. It depends on Mn(2+) as a cofactor. Mg(2+) serves as cofactor.

It is found in the cytoplasm. It carries out the reaction Endonucleolytic cleavage to 5'-phosphomonoester.. Endonuclease that specifically degrades the RNA of RNA-DNA hybrids. This chain is Ribonuclease HII, found in Yersinia pseudotuberculosis serotype O:1b (strain IP 31758).